Consider the following 445-residue polypeptide: Phosphoglucosamine mutase (445 aa).

The Phosphoserine intermediate role is filled by Ser102. Residues Ser102, Asp241, Asp243, and Asp245 each coordinate Mg(2+). Ser102 carries the post-translational modification Phosphoserine.

Belongs to the phosphohexose mutase family. It depends on Mg(2+) as a cofactor. Activated by phosphorylation.

The catalysed reaction is alpha-D-glucosamine 1-phosphate = D-glucosamine 6-phosphate. Functionally, catalyzes the conversion of glucosamine-6-phosphate to glucosamine-1-phosphate. The polypeptide is Phosphoglucosamine mutase (Shewanella oneidensis (strain ATCC 700550 / JCM 31522 / CIP 106686 / LMG 19005 / NCIMB 14063 / MR-1)).